Reading from the N-terminus, the 326-residue chain is Ficolin-1 (326 aa).

The signal sequence occupies residues 1 to 29 (MELSGATMARGLAVLLVLFLHIKNLPAQA). One can recognise a Collagen-like domain in the interval 55–93 (GLPGAPGPKGEAGVIGERGERGLPGAPGKAGPVGPKGDR). Residues 72 to 111 (RGERGLPGAPGKAGPVGPKGDRGEKGMRGEKGDAGQSQSC) form a disordered region. Residues 77 to 89 (LPGAPGKAGPVGP) show a composition bias toward low complexity. A compositionally biased stretch (basic and acidic residues) spans 90–104 (KGDRGEKGMRGEKGD). The region spanning 109–326 (QSCATGPRNC…KVSEMKVRPA (218 aa)) is the Fibrinogen C-terminal domain. 2 disulfides stabilise this stretch: cysteine 111–cysteine 139 and cysteine 118–cysteine 146. Residues 115–154 (PRNCKDLLDRGYFLSGWHTIYLPDCRPLTVLCDMDTDGGG) are a domain; contributes to trimerization. The b domain; contributes to trimerization stretch occupies residues 155–243 (WTVFQRRMDG…LVLGAFVGGS (89 aa)). The Ca(2+) site is built by aspartate 262, aspartate 264, serine 266, and serine 268. Cysteine 270 and cysteine 283 are oxidised to a cystine. 282-284 (DCH) serves as a coordination point for a carbohydrate. An N-linked (GlcNAc...) asparagine glycan is attached at asparagine 305. The p domain stretch occupies residues 317–326 (KVSEMKVRPA).

This sequence belongs to the ficolin lectin family. As to quaternary structure, homotrimer. Interacts with elastin/ELN. Interacts (via Fibrinogen C-terminal domain) with FFAR2. Interacts with CRP; may regulate monocyte activation by FCN1. As to expression, peripheral blood leukocytes, monocytes and granulocytes. Also detected in spleen, lung, and thymus, may be due to the presence of tissue macrophages or trapped blood in these tissues. Not detected on lymphocytes.

It is found in the secreted. It localises to the cell membrane. In terms of biological role, extracellular lectin functioning as a pattern-recognition receptor in innate immunity. Binds the sugar moieties of pathogen-associated molecular patterns (PAMPs) displayed on microbes and activates the lectin pathway of the complement system. May also activate monocytes through a G protein-coupled receptor, FFAR2, inducing the secretion of interleukin-8/IL-8. Binds preferentially to 9-O-acetylated 2-6-linked sialic acid derivatives and to various glycans containing sialic acid engaged in a 2-3 linkage. This is Ficolin-1 (FCN1) from Homo sapiens (Human).